Consider the following 701-residue polypeptide: Elongation factor G 1 (701 aa).

The tr-type G domain maps to 13–288 (KYTRNIGIMA…GVIDYLPSPL (276 aa)). Residues 22-29 (AHIDAGKT), 86-90 (DTPGH), and 140-143 (NKMD) each bind GTP.

The protein belongs to the TRAFAC class translation factor GTPase superfamily. Classic translation factor GTPase family. EF-G/EF-2 subfamily.

It is found in the cytoplasm. Its function is as follows. Catalyzes the GTP-dependent ribosomal translocation step during translation elongation. During this step, the ribosome changes from the pre-translocational (PRE) to the post-translocational (POST) state as the newly formed A-site-bound peptidyl-tRNA and P-site-bound deacylated tRNA move to the P and E sites, respectively. Catalyzes the coordinated movement of the two tRNA molecules, the mRNA and conformational changes in the ribosome. The protein is Elongation factor G 1 of Bdellovibrio bacteriovorus (strain ATCC 15356 / DSM 50701 / NCIMB 9529 / HD100).